The following is a 287-amino-acid chain: Protoheme IX farnesyltransferase (287 aa).

Transmembrane regions (helical) follow at residues 9–29, 31–51, 94–114, 132–152, 158–178, 202–222, 228–248, and 267–287; these read IVTMILVTTVASALIAGSATL, LIDWFWLMIGTALIAGSAGAA, IILWLGNGLVPACVGIATWLI, VGAIAGALPVFIGYTAAGGTL, WMLFGVLACWQYPHFMAIAWL, AWQSILGSVALATCGVVLAWF, VASAASVLATVLILAASWPLL, and LRWSLVVLPAVLLVMTLRASL.

Belongs to the UbiA prenyltransferase family. Protoheme IX farnesyltransferase subfamily.

It is found in the cell inner membrane. It carries out the reaction heme b + (2E,6E)-farnesyl diphosphate + H2O = Fe(II)-heme o + diphosphate. It participates in porphyrin-containing compound metabolism; heme O biosynthesis; heme O from protoheme: step 1/1. Functionally, converts heme B (protoheme IX) to heme O by substitution of the vinyl group on carbon 2 of heme B porphyrin ring with a hydroxyethyl farnesyl side group. The chain is Protoheme IX farnesyltransferase from Rhodopirellula baltica (strain DSM 10527 / NCIMB 13988 / SH1).